A 664-amino-acid chain; its full sequence is DNA ligase (664 aa).

NAD(+)-binding positions include 32 to 36 (DKEYD) and 80 to 81 (SL). K122 serves as the catalytic N6-AMP-lysine intermediate. Residues R144, E178, and K314 each coordinate NAD(+). Residues C407, C410, C423, and C429 each coordinate Zn(2+). Residues 587-664 (IDENPFMDKT…NEEEFSNKIK (78 aa)) enclose the BRCT domain.

Belongs to the NAD-dependent DNA ligase family. LigA subfamily. Mg(2+) is required as a cofactor. Requires Mn(2+) as cofactor.

It catalyses the reaction NAD(+) + (deoxyribonucleotide)n-3'-hydroxyl + 5'-phospho-(deoxyribonucleotide)m = (deoxyribonucleotide)n+m + AMP + beta-nicotinamide D-nucleotide.. DNA ligase that catalyzes the formation of phosphodiester linkages between 5'-phosphoryl and 3'-hydroxyl groups in double-stranded DNA using NAD as a coenzyme and as the energy source for the reaction. It is essential for DNA replication and repair of damaged DNA. The polypeptide is DNA ligase (Clostridium botulinum (strain ATCC 19397 / Type A)).